Here is a 269-residue protein sequence, read N- to C-terminus: MSAITPSSEVAAGITTPDFPRDIRPRSIREMHVPPSDPVPDVPIPTNTTGKPVYYIYDGSITRASGQLVRDHSCDGPIHYTDPLWECTLFEHLPPSHPGWPNDCVLPYDHNMSPYHRVPIRTICGFNYWETDRLDSTNASFWPALYKCSGFRRNYPWRYSTDQLLAALDMTPEQLVSAKSCVSVVALLNTMNWTSHHLSGLRPQHVHYCMSDWSVQFTKEDLEVLTPGAWFDGLLRVPVDPRVPAIGLTKEQLWTHPFVILGWLRLALQ.

The interval 1–23 is disordered; the sequence is MSAITPSSEVAAGITTPDFPRDI.

Belongs to the aquareoviridae NS4 protein family.

The sequence is that of Non-structural protein 4 (S7) from Aquareovirus G (isolate American grass carp/USA/PB01-155/-) (AQRV-G).